Here is a 962-residue protein sequence, read N- to C-terminus: Insulin-degrading enzyme homolog (962 aa).

Over residues 1–10 (MVANEQQQQQ) the composition is skewed to low complexity. The tract at residues 1–21 (MVANEQQQQQQEEERKEVKLI) is disordered. His-74 lines the Zn(2+) pocket. Glu-77 acts as the Proton acceptor in catalysis. Positions 78 and 155 each coordinate Zn(2+).

Belongs to the peptidase M16 family. In terms of assembly, homodimer. Zn(2+) is required as a cofactor.

It is found in the cytoplasm. The protein is Insulin-degrading enzyme homolog of Dictyostelium discoideum (Social amoeba).